The primary structure comprises 304 residues: MIQNSRPSLLQPQDVGDTVETLMLHPVIKAFLCGSISGTCSTLLFQPLDLLKTRLQTLQPSDHGSRRVGMLAVLLKVVRTESLLGLWKGMSPSIVRCVPGVGIYFGTLYSLKQYFLRGHPPTALESVMLGVGSRSVAGVCMSPITVIKTRYESGKYGYESIYAALRSIYHSEGHRGLFSGLTATLLRDAPFSGIYLMFYNQTKNIVPHDQVDATLIPITNFSCGIFAGILASLVTQPADVIKTHMQLYPLKFQWIGQAVTLIFKDYGLRGFFQGGIPRALRRTLMAAMAWTVYEEMMAKMGLKS.

Solcar repeat units follow at residues 25 to 114 (HPVI…LKQY), 121 to 205 (PTAL…TKNI), and 215 to 299 (LIPI…MMAK). The next 6 helical transmembrane spans lie at 31 to 56 (FLCGSISGTCSTLLFQPLDLLKTRLQ), 89 to 115 (GMSPSIVRCVPGVGIYFGTLYSLKQYF), 127 to 152 (VMLGVGSRSVAGVCMSPITVIKTRYE), 180 to 203 (GLTATLLRDAPFSGIYLMFYNQTK), 219 to 245 (TNFSCGIFAGILASLVTQPADVIKTHM), and 274 to 292 (GGIPRALRRTLMAAMAWTV).

It belongs to the mitochondrial carrier (TC 2.A.29) family. SLC25A38 subfamily. Preferentially expressed in erythroid cells.

It is found in the mitochondrion inner membrane. It carries out the reaction glycine(in) = glycine(out). Its function is as follows. Mitochondrial glycine transporter that imports glycine into the mitochondrial matrix. Plays an important role in providing glycine for the first enzymatic step in heme biosynthesis, the condensation of glycine with succinyl-CoA to produce 5-aminolevulinate (ALA) in the mitochondrial matrix. Required during erythropoiesis. Plays a role as pro-apoptotic protein that induces caspase-dependent apoptosis. The chain is Mitochondrial glycine transporter from Homo sapiens (Human).